We begin with the raw amino-acid sequence, 95 residues long: Large ribosomal subunit protein eL31 (95 aa).

Belongs to the eukaryotic ribosomal protein eL31 family. In terms of assembly, part of the 50S ribosomal subunit.

In Pyrococcus furiosus (strain ATCC 43587 / DSM 3638 / JCM 8422 / Vc1), this protein is Large ribosomal subunit protein eL31.